Reading from the N-terminus, the 412-residue chain is Multidrug resistance protein MdtG (412 aa).

Transmembrane regions (helical) follow at residues 19–39 (LGCF…PLYV), 56–76 (LVFS…GGLA), 90–110 (LGMS…QFLL), 113–133 (ALLG…ATQI), 144–164 (TLST…GFLA), 171–191 (TVFF…LFLI), 222–242 (LFVT…ILTL), 254–274 (IAFI…MSAP), 288–308 (ILIV…FVQT), 317–337 (FLLG…LVYN), and 376–396 (AVFL…TLSL).

Belongs to the major facilitator superfamily. DHA1 family. MdtG (TC 2.A.1.2.20) subfamily.

Its subcellular location is the cell inner membrane. In Klebsiella pneumoniae (strain 342), this protein is Multidrug resistance protein MdtG.